Here is a 1167-residue protein sequence, read N- to C-terminus: Nucleolar protein 8 (1167 aa).

An RRM domain is found at 8–89; that stretch reads KRLYVGGLSQ…GTLQIQLAKE (82 aa). Positions 223 to 304 are disordered; it reads VQKDESSTGS…NSISDDDTDS (82 aa). Residue Lys-225 forms a Glycyl lysine isopeptide (Lys-Gly) (interchain with G-Cter in SUMO2) linkage. Over residues 248–275 the composition is skewed to polar residues; it reads LTQQQAAQKRTCDSITPSKSSPVPVSDT. Residues Ser-268 and Ser-298 each carry the phosphoserine modification. The residue at position 302 (Thr-302) is a Phosphothreonine. At Ser-304 the chain carries Phosphoserine. Lys-314 is covalently cross-linked (Glycyl lysine isopeptide (Lys-Gly) (interchain with G-Cter in SUMO2)). 2 positions are modified to phosphoserine: Ser-331 and Ser-365. Tyr-376 is modified (phosphotyrosine). Ser-378 carries the post-translational modification Phosphoserine. At Thr-381 the chain carries Phosphothreonine. Ser-432 is modified (phosphoserine). Disordered regions lie at residues 435-470, 499-533, 590-908, 932-982, and 1006-1026; these read ESALSHGLKSLNRKSPSHSSSSEDADSASELADSEG, LKVPNEDTKSDGPETTTQCKFDRGSKSPKTPTGLR, KDSV…EEEL, NRGS…AEKL, and YTSEKEEGTPWNEDCGKEKPE. The segment covering 457-470 has biased composition (acidic residues); that stretch reads EDADSASELADSEG. Positions 501–510 are enriched in basic and acidic residues; it reads VPNEDTKSDG. The segment covering 640–652 has biased composition (polar residues); that stretch reads NYIQPQKRQTTFE. Basic and acidic residues predominate over residues 653–668; that stretch reads SQDRKAVSPSSSEKRS. Ser-723 carries the phosphoserine modification. Residues 727–736 show a composition bias toward basic and acidic residues; the sequence is SSKDTREIKT. Positions 738–748 are enriched in polar residues; sequence FSLSISNSSDV. The segment covering 749 to 776 has biased composition (basic and acidic residues); the sequence is SAKDKHAEDNEKRLAALEARQKAKEVQK. Residues 753-779 are a coiled coil; that stretch reads KHAEDNEKRLAALEARQKAKEVQKKLV. Residue Thr-795 is modified to Phosphothreonine. Ser-801 is modified (phosphoserine). A compositionally biased stretch (basic and acidic residues) spans 817 to 827; it reads HPGEEWVKESM. Residues Ser-837, Ser-838, Ser-843, and Ser-845 each carry the phosphoserine modification. Over residues 837-847 the composition is skewed to acidic residues; sequence SSDDDESDSED. The span at 874 to 887 shows a compositional bias: basic and acidic residues; it reads GTDDRFRMDSRFLE. Residues 886–924 are a coiled coil; it reads LETDSEEEQEEVNEKKTAEEEELAEEKKKALNVVQSVLQ. Phosphothreonine is present on Thr-888. Ser-890 is modified (phosphoserine). Composition is skewed to basic and acidic residues over residues 940-968 and 1007-1026; these read KFKDIIHYDPTKQDHATYERKRDDKPKES and TSEKEEGTPWNEDCGKEKPE. Ser-1036 carries the phosphoserine modification. Lys-1057 is covalently cross-linked (Glycyl lysine isopeptide (Lys-Gly) (interchain with G-Cter in SUMO2)). Disordered stretches follow at residues 1071–1105 and 1145–1167; these read IVWQEDPRLQDSSSEEEDVTEETDHRNSSPGEASL and RTTNLRMDCRKKHKDAKRKMKPK. A phosphoserine mark is found at Ser-1082, Ser-1083, Ser-1084, and Ser-1099. A compositionally biased stretch (basic residues) spans 1153 to 1167; that stretch reads CRKKHKDAKRKMKPK.

In terms of assembly, interacts with the GTP form of RRAGA, RRAGC and RRAGD. Interacts with NIP7. Interacts with DDX18; the interaction is RNA-dependent. Interacts with DDX47; the interaction is RNA-dependent. Phosphorylated. In terms of tissue distribution, expressed in various diffuse-type gastric cancers. Detected at lower levels in skeletal muscle.

The protein localises to the nucleus. It localises to the nucleolus. Functionally, plays an essential role in the survival of diffuse-type gastric cancer cells. Acts as a nucleolar anchoring protein for DDX47. May be involved in regulation of gene expression at the post-transcriptional level or in ribosome biogenesis in cancer cells. The sequence is that of Nucleolar protein 8 from Homo sapiens (Human).